The chain runs to 133 residues: Small ribosomal subunit protein uS8 (133 aa).

This sequence belongs to the universal ribosomal protein uS8 family. Part of the 30S ribosomal subunit. Contacts proteins S5 and S12.

Functionally, one of the primary rRNA binding proteins, it binds directly to 16S rRNA central domain where it helps coordinate assembly of the platform of the 30S subunit. This Crocosphaera subtropica (strain ATCC 51142 / BH68) (Cyanothece sp. (strain ATCC 51142)) protein is Small ribosomal subunit protein uS8.